We begin with the raw amino-acid sequence, 246 residues long: Sulfate transporter CysZ (246 aa).

4 helical membrane-spanning segments follow: residues 24–44 (LFVL…IGFA), 69–89 (IVWP…FTMV), 148–168 (LLVL…WILF), and 214–234 (LLIP…ATLF).

This sequence belongs to the CysZ family.

It is found in the cell inner membrane. High affinity, high specificity proton-dependent sulfate transporter, which mediates sulfate uptake. Provides the sulfur source for the cysteine synthesis pathway. This chain is Sulfate transporter CysZ, found in Pseudomonas aeruginosa (strain ATCC 15692 / DSM 22644 / CIP 104116 / JCM 14847 / LMG 12228 / 1C / PRS 101 / PAO1).